The primary structure comprises 266 residues: Undecaprenyl-diphosphatase (266 aa).

8 helical membrane-spanning segments follow: residues 1–21, 39–59, 87–107, 113–133, 143–163, 187–207, 218–238, and 244–264; these read MTLF…FLPI, QGLA…MIYF, WYVI…KGWI, TALV…YADA, GLTL…LIPG, FSFL…TLDL, ALLY…YLFL, and IGML…LWFV.

It belongs to the UppP family.

The protein resides in the cell inner membrane. The enzyme catalyses di-trans,octa-cis-undecaprenyl diphosphate + H2O = di-trans,octa-cis-undecaprenyl phosphate + phosphate + H(+). Catalyzes the dephosphorylation of undecaprenyl diphosphate (UPP). Confers resistance to bacitracin. This chain is Undecaprenyl-diphosphatase, found in Alteromonas mediterranea (strain DSM 17117 / CIP 110805 / LMG 28347 / Deep ecotype).